The chain runs to 721 residues: uncharacterized protein (721 aa).

2 disordered regions span residues 196–291 (TSMT…VGGP) and 370–513 (AGIP…AAEQ). 2 stretches are compositionally biased toward low complexity: residues 202-224 (SPAG…TSGP) and 232-250 (SPFG…SSGP). Composition is skewed to pro residues over residues 264–283 (PMPP…PPSA) and 379–389 (APTPSPAPIAP). Over residues 419–429 (APAGPLPAYGA) the composition is skewed to low complexity. The segment covering 435–446 (VTTPPATPPTPT) has biased composition (pro residues). Residues 470-484 (VNKSTAPATTQAQPS) are compositionally biased toward polar residues. Positions 491 to 505 (ASATAAATTGAAAGD) are enriched in low complexity.

This is an uncharacterized protein from Mycobacterium tuberculosis (strain ATCC 25618 / H37Rv).